The chain runs to 125 residues: MEPAMSLCDLKRATRRKRRVRLKLRSLSSVRLSVFKSNRHFYAQLIDDEKGATLAAASTLEPDVLATAKRRVNSEAARVVARLFAGRLDGLDANYRKFVLDRGSCRYIGVVAAFADELRSLGFEF.

The protein belongs to the universal ribosomal protein uL18 family. Part of the 50S ribosomal subunit; part of the 5S rRNA/L5/L18/L25 subcomplex. Contacts the 5S and 23S rRNAs.

In terms of biological role, this is one of the proteins that bind and probably mediate the attachment of the 5S RNA into the large ribosomal subunit, where it forms part of the central protuberance. The chain is Large ribosomal subunit protein uL18 from Anaplasma marginale (strain Florida).